A 426-amino-acid chain; its full sequence is Putative two-component response regulator ARR20 (426 aa).

A Response regulatory domain is found at 40 to 155; sequence SNRVLLVGAD…VIAVLWRHVY (116 aa). Asp91 carries the post-translational modification 4-aspartylphosphate. Residues 161–216 are disordered; it reads KSGLDKPGESGTVESDPDEYDDLEQDNLYESNEEGSKNTCDHKEEKSPTKKPRMQW. A compositionally biased stretch (acidic residues) spans 175-193; it reads SDPDEYDDLEQDNLYESNE. Residues 194–208 show a composition bias toward basic and acidic residues; the sequence is EGSKNTCDHKEEKSP. Residues 210–213 carry the Nuclear localization signal motif; sequence KKPR. A DNA-binding region (myb-like GARP) is located at residues 213–268; sequence RMQWTPELHHKFEVAVEKMGSLEKAFPKTILKYMQEELNVQGLTRNNVASHLQKYR.

The protein belongs to the ARR family. Type-B subfamily. As to quaternary structure, binds the target DNA as a monomer. Two-component system major event consists of a His-to-Asp phosphorelay between a sensor histidine kinase (HK) and a response regulator (RR). In plants, the His-to-Asp phosphorelay involves an additional intermediate named Histidine-containing phosphotransfer protein (HPt). This multistep phosphorelay consists of a His-Asp-His-Asp sequential transfer of a phosphate group between first a His and an Asp of the HK protein, followed by the transfer to a conserved His of the HPt protein and finally the transfer to an Asp in the receiver domain of the RR protein. Predominantly expressed in mature pistil tip. Also detected in the shoot apical meristem as well as vascular tissue and hydathodes of the leaves.

Its subcellular location is the nucleus. Functionally, putative transcriptional activator that binds specifically to the DNA sequence 5'-[AG]GATT-3'. Functions as a response regulator involved in His-to-Asp phosphorelay signal transduction system. Phosphorylation of the Asp residue in the receiver domain activates the ability of the protein to promote the transcription of target genes. Could directly activate some type-A response regulators in response to cytokinins. The polypeptide is Putative two-component response regulator ARR20 (ARR20) (Arabidopsis thaliana (Mouse-ear cress)).